The primary structure comprises 320 residues: MTLWNGVLPFYPQPRHAAGFSVPLLIVILVFLALAASFLLILPGIRGHSRWFWLVRVLLSLFIGAEIVAVHFSAEWFVGTVNTNTSYKAFSAARVTARVRLLVGLEGINITLTGTPVHQLNETIDYNEQFTWRLKENYAAEYANALEKGLPDPVLYLAEKFTPSSPCGLYHQYHLAGHYASATLWVAFCFWLLSNVLLSTPAPLYGGLALLTTGAFALFGVFALASISSVPLCPLRLGSSALTTQYGAAFWVTLATGVLCLFLGGAVVSLQYVRPSALRTLLDQSAKDCSQERGGSPLILGDPLHKQAALPDLKCITTNL.

At 1–21 (MTLWNGVLPFYPQPRHAAGFS) the chain is on the extracellular side. Residues 22–42 (VPLLIVILVFLALAASFLLIL) form a helical membrane-spanning segment. Topologically, residues 43–56 (PGIRGHSRWFWLVR) are cytoplasmic. Residues 57–77 (VLLSLFIGAEIVAVHFSAEWF) form a helical membrane-spanning segment. Topologically, residues 78–183 (VGTVNTNTSY…HLAGHYASAT (106 aa)) are extracellular. Residues Asn84, Asn109, and Asn121 are each glycosylated (N-linked (GlcNAc...) asparagine). A helical membrane pass occupies residues 184-204 (LWVAFCFWLLSNVLLSTPAPL). The Cytoplasmic segment spans residues 205 to 206 (YG). Residues 207–227 (GLALLTTGAFALFGVFALASI) form a helical membrane-spanning segment. Topologically, residues 228–247 (SSVPLCPLRLGSSALTTQYG) are extracellular. Residues 248–268 (AAFWVTLATGVLCLFLGGAVV) form a helical membrane-spanning segment. The Cytoplasmic portion of the chain corresponds to 269 to 320 (SLQYVRPSALRTLLDQSAKDCSQERGGSPLILGDPLHKQAALPDLKCITTNL).

It belongs to the DUOXA family. In terms of assembly, heterodimer with DUXA2; disulfide-linked. Interacts with CSNK1G2. N-glycosylated. In terms of tissue distribution, specifically expressed in thyroid. Also detected in salivary glands.

Its subcellular location is the endoplasmic reticulum membrane. Required for the maturation and the transport from the endoplasmic reticulum to the plasma membrane of functional DUOX2. May play a role in thyroid hormone synthesis. This Homo sapiens (Human) protein is Dual oxidase maturation factor 2 (DUOXA2).